A 370-amino-acid chain; its full sequence is Histidinol-phosphate aminotransferase 1 (370 aa).

Residue Lys229 is modified to N6-(pyridoxal phosphate)lysine.

The protein belongs to the class-II pyridoxal-phosphate-dependent aminotransferase family. Histidinol-phosphate aminotransferase subfamily. Homodimer. The cofactor is pyridoxal 5'-phosphate.

The catalysed reaction is L-histidinol phosphate + 2-oxoglutarate = 3-(imidazol-4-yl)-2-oxopropyl phosphate + L-glutamate. The protein operates within amino-acid biosynthesis; L-histidine biosynthesis; L-histidine from 5-phospho-alpha-D-ribose 1-diphosphate: step 7/9. This is Histidinol-phosphate aminotransferase 1 from Nitrosococcus oceani (strain ATCC 19707 / BCRC 17464 / JCM 30415 / NCIMB 11848 / C-107).